A 142-amino-acid polypeptide reads, in one-letter code: Transcriptional regulator MraZ (142 aa).

SpoVT-AbrB domains lie at 5 to 47 (THSP…SERE) and 76 to 119 (ASDE…DAQA).

Belongs to the MraZ family. As to quaternary structure, forms oligomers.

It is found in the cytoplasm. Its subcellular location is the nucleoid. The protein is Transcriptional regulator MraZ of Arthrobacter sp. (strain FB24).